We begin with the raw amino-acid sequence, 480 residues long: Sulfate adenylyltransferase subunit 1 (480 aa).

In terms of domain architecture, tr-type G spans 30-248 (KGLLRFLTCG…TVDVKKEASK (219 aa)). The G1 stretch occupies residues 39 to 46 (GSVDDGKS). Residue 39-46 (GSVDDGKS) coordinates GTP. A G2 region spans residues 97–101 (GITID). The tract at residues 118–121 (DTPG) is G3. GTP contacts are provided by residues 118–122 (DTPGH) and 173–176 (NKMD). The interval 173–176 (NKMD) is G4. The interval 211-213 (SAL) is G5.

This sequence belongs to the TRAFAC class translation factor GTPase superfamily. Classic translation factor GTPase family. CysN/NodQ subfamily. In terms of assembly, heterodimer composed of CysD, the smaller subunit, and CysN.

It carries out the reaction sulfate + ATP + H(+) = adenosine 5'-phosphosulfate + diphosphate. It functions in the pathway sulfur metabolism; hydrogen sulfide biosynthesis; sulfite from sulfate: step 1/3. With CysD forms the ATP sulfurylase (ATPS) that catalyzes the adenylation of sulfate producing adenosine 5'-phosphosulfate (APS) and diphosphate, the first enzymatic step in sulfur assimilation pathway. APS synthesis involves the formation of a high-energy phosphoric-sulfuric acid anhydride bond driven by GTP hydrolysis by CysN coupled to ATP hydrolysis by CysD. The polypeptide is Sulfate adenylyltransferase subunit 1 (Photorhabdus laumondii subsp. laumondii (strain DSM 15139 / CIP 105565 / TT01) (Photorhabdus luminescens subsp. laumondii)).